A 362-amino-acid polypeptide reads, in one-letter code: Phosphoserine aminotransferase (362 aa).

An L-glutamate-binding site is contributed by Arg41. Residues 75-76 (GS), Phe101, Thr152, Asp173, and Gln196 contribute to the pyridoxal 5'-phosphate site. Lys197 bears the N6-(pyridoxal phosphate)lysine mark. A pyridoxal 5'-phosphate-binding site is contributed by 239-240 (NT).

Belongs to the class-V pyridoxal-phosphate-dependent aminotransferase family. SerC subfamily. Homodimer. Requires pyridoxal 5'-phosphate as cofactor.

It is found in the cytoplasm. The catalysed reaction is O-phospho-L-serine + 2-oxoglutarate = 3-phosphooxypyruvate + L-glutamate. It carries out the reaction 4-(phosphooxy)-L-threonine + 2-oxoglutarate = (R)-3-hydroxy-2-oxo-4-phosphooxybutanoate + L-glutamate. Its pathway is amino-acid biosynthesis; L-serine biosynthesis; L-serine from 3-phospho-D-glycerate: step 2/3. Its function is as follows. Catalyzes the reversible conversion of 3-phosphohydroxypyruvate to phosphoserine and of 3-hydroxy-2-oxo-4-phosphonooxybutanoate to phosphohydroxythreonine. This Leuconostoc mesenteroides subsp. mesenteroides (strain ATCC 8293 / DSM 20343 / BCRC 11652 / CCM 1803 / JCM 6124 / NCDO 523 / NBRC 100496 / NCIMB 8023 / NCTC 12954 / NRRL B-1118 / 37Y) protein is Phosphoserine aminotransferase.